Here is a 125-residue protein sequence, read N- to C-terminus: Small ribosomal subunit protein eS8 (125 aa).

Residues 1-20 (MIWQGRSRRKPSGGFYRKAR) are disordered.

It belongs to the eukaryotic ribosomal protein eS8 family. Part of the 30S ribosomal subunit.

This chain is Small ribosomal subunit protein eS8 (rps8e), found in Archaeoglobus fulgidus (strain ATCC 49558 / DSM 4304 / JCM 9628 / NBRC 100126 / VC-16).